A 170-amino-acid polypeptide reads, in one-letter code: Cathelicidin antimicrobial peptide (170 aa).

Residues 1-30 (MKTQRDGHSLGRWSLVLLLLGLVMPLAIVA) form the signal peptide. The propeptide at 31 to 131 (QVLSYKEAVL…DISCDKDNKR (101 aa)) is cathelin-like domain (CLD). Intrachain disulfides connect cysteine 86-cysteine 97 and cysteine 108-cysteine 125. The segment at 150 to 162 (FKRIVQRIKDFLR) is active core.

Belongs to the cathelicidin family. In terms of assembly, monomer, homodimer or homotrimer (in vitro). Oligomerizes as tetra- or hexamer in solution (in vitro). Post-translationally, proteolytically cleaved by proteinase PRTN3 into antibacterial peptide LL-37. Proteolytically cleaved by cathepsin CTSG and neutrophil elastase ELANE. Resistant to proteolytic degradation in solution, and when bound to both zwitterionic (mimicking mammalian membranes) and negatively charged membranes (mimicking bacterial membranes). In terms of processing, after secretion onto the skin surface, the CAMP gene product is processed by a serine protease-dependent mechanism into multiple novel antimicrobial peptides distinct from and shorter than cathelicidin LL-37. These peptides show enhanced antimicrobial action, acquiring the ability to kill skin pathogens such as S.aureus, E.coli and C.albicans. These peptides have lost the ability to stimulate CXCL8/IL8 release from keratinocytes. The peptides act synergistically, killing bacteria at lower concentrations when present together, and maintain activity at increased salt condition.

The protein localises to the secreted. Its subcellular location is the vesicle. In terms of biological role, antimicrobial protein that is an integral component of the innate immune system. Binds to bacterial lipopolysaccharides (LPS). Acts via neutrophil N-formyl peptide receptors to enhance the release of CXCL2. Postsecretory processing generates multiple cathelicidin antimicrobial peptides with various lengths which act as a topical antimicrobial defense in sweat on skin. The unprocessed precursor form, cathelicidin antimicrobial peptide, inhibits the growth of Gram-negative E.coli and E.aerogenes with efficiencies comparable to that of the mature peptide LL-37 (in vitro). Its function is as follows. Antimicrobial peptide that is an integral component of the innate immune system. Binds to bacterial lipopolysaccharides (LPS). Causes membrane permeabilization by forming transmembrane pores (in vitro). Causes lysis of E.coli. Exhibits antimicrobial activity against Gram-negative bacteria such as P.aeruginosa, S.typhimurium, E.aerogenes, E.coli and P.syringae, Gram-positive bacteria such as L.monocytogenes, S.epidermidis, S.pyogenes and S.aureus, as well as vancomycin-resistant enterococci (in vitro). Exhibits antimicrobial activity against methicillin-resistant S.aureus, P.mirabilis, and C.albicans in low-salt media, but not in media containing 100 mM NaCl (in vitro). Forms chiral supramolecular assemblies with quinolone signal (PQS) molecules of P.aeruginosa, which may lead to interference of bacterial quorum signaling and perturbance of bacterial biofilm formation. May form supramolecular fiber-like assemblies on bacterial membranes. Induces cytokine and chemokine producation as well as TNF/TNFA and CSF2/GMCSF production in normal human keratinocytes. Exhibits hemolytic activity against red blood cells. Functionally, exhibits antimicrobial activity against E.coli and B.megaterium (in vitro). This is Cathelicidin antimicrobial peptide from Pan troglodytes (Chimpanzee).